The chain runs to 350 residues: Glutamyl-tRNA reductase (350 aa).

Residues 53-56 (TCNR), Ser105, 110-112 (ETQ), and Gln116 contribute to the substrate site. Cys54 serves as the catalytic Nucleophile. Position 185–190 (185–190 (GAGETA)) interacts with NADP(+).

Belongs to the glutamyl-tRNA reductase family. As to quaternary structure, homodimer.

The catalysed reaction is (S)-4-amino-5-oxopentanoate + tRNA(Glu) + NADP(+) = L-glutamyl-tRNA(Glu) + NADPH + H(+). The protein operates within porphyrin-containing compound metabolism; protoporphyrin-IX biosynthesis; 5-aminolevulinate from L-glutamyl-tRNA(Glu): step 1/2. Its function is as follows. Catalyzes the NADPH-dependent reduction of glutamyl-tRNA(Glu) to glutamate 1-semialdehyde (GSA). This Deinococcus radiodurans (strain ATCC 13939 / DSM 20539 / JCM 16871 / CCUG 27074 / LMG 4051 / NBRC 15346 / NCIMB 9279 / VKM B-1422 / R1) protein is Glutamyl-tRNA reductase.